The primary structure comprises 631 residues: Phosphomethylpyrimidine synthase (631 aa).

Residues Asn-239, Met-268, Tyr-297, His-333, 353–355 (SRG), 394–397 (DGLR), and Glu-433 each bind substrate. Zn(2+) is bound at residue His-437. Residue Tyr-460 coordinates substrate. Zn(2+) is bound at residue His-501. Residues Cys-581, Cys-584, and Cys-589 each contribute to the [4Fe-4S] cluster site.

The protein belongs to the ThiC family. As to quaternary structure, homodimer. [4Fe-4S] cluster serves as cofactor.

The enzyme catalyses 5-amino-1-(5-phospho-beta-D-ribosyl)imidazole + S-adenosyl-L-methionine = 4-amino-2-methyl-5-(phosphooxymethyl)pyrimidine + CO + 5'-deoxyadenosine + formate + L-methionine + 3 H(+). It participates in cofactor biosynthesis; thiamine diphosphate biosynthesis. In terms of biological role, catalyzes the synthesis of the hydroxymethylpyrimidine phosphate (HMP-P) moiety of thiamine from aminoimidazole ribotide (AIR) in a radical S-adenosyl-L-methionine (SAM)-dependent reaction. This is Phosphomethylpyrimidine synthase from Escherichia fergusonii (strain ATCC 35469 / DSM 13698 / CCUG 18766 / IAM 14443 / JCM 21226 / LMG 7866 / NBRC 102419 / NCTC 12128 / CDC 0568-73).